We begin with the raw amino-acid sequence, 425 residues long: Trigger factor (425 aa).

The 86-residue stretch at Gly-163 to Pro-248 folds into the PPIase FKBP-type domain.

The protein belongs to the FKBP-type PPIase family. Tig subfamily.

The protein resides in the cytoplasm. The catalysed reaction is [protein]-peptidylproline (omega=180) = [protein]-peptidylproline (omega=0). Functionally, involved in protein export. Acts as a chaperone by maintaining the newly synthesized protein in an open conformation. Functions as a peptidyl-prolyl cis-trans isomerase. The sequence is that of Trigger factor from Bacillus cereus (strain G9842).